Reading from the N-terminus, the 311-residue chain is Phosphoglycerate mutase 2 (311 aa).

Substrate is bound by residues 16–23 (RHGQSELN), 29–30 (CG), arginine 73, 126–129 (ERHY), lysine 137, 153–154 (RR), and 243–244 (GS). Histidine 17 functions as the Tele-phosphohistidine intermediate in the catalytic mechanism. The active-site Proton donor/acceptor is glutamate 126.

It belongs to the phosphoglycerate mutase family. BPG-dependent PGAM subfamily.

Its subcellular location is the cytoplasm. It catalyses the reaction (2R)-2-phosphoglycerate = (2R)-3-phosphoglycerate. It functions in the pathway carbohydrate degradation; glycolysis; pyruvate from D-glyceraldehyde 3-phosphate: step 3/5. In terms of biological role, could be non-functional. The polypeptide is Phosphoglycerate mutase 2 (GPM2) (Saccharomyces cerevisiae (strain ATCC 204508 / S288c) (Baker's yeast)).